The chain runs to 296 residues: Coatomer subunit epsilon (296 aa).

The protein belongs to the COPE family. In terms of assembly, oligomeric complex that consists of at least the alpha, beta, beta', gamma, delta, epsilon and zeta subunits. Interacts with the ESCRT-0 subunit VPS27.

The protein localises to the cytoplasm. Its subcellular location is the golgi apparatus membrane. The protein resides in the cytoplasmic vesicle. It localises to the COPI-coated vesicle membrane. Its function is as follows. The coatomer is a cytosolic protein complex that binds to dilysine motifs and reversibly associates with Golgi non-clathrin-coated vesicles, which further mediate biosynthetic protein transport from the ER, via the Golgi up to the trans Golgi network. The coatomer complex is required for budding from Golgi membranes, and is essential for the retrograde Golgi-to-ER transport of dilysine-tagged proteins. In Saccharomyces cerevisiae (strain ATCC 204508 / S288c) (Baker's yeast), this protein is Coatomer subunit epsilon (SEC28).